The following is a 164-amino-acid chain: Phosphopantetheine adenylyltransferase (164 aa).

Substrate is bound at residue Ser-9. ATP contacts are provided by residues 9–10 (SF) and His-17. Positions 41, 73, and 87 each coordinate substrate. Residues 88–90 (GLR), Glu-98, and 123–129 (HSFLSSS) each bind ATP.

It belongs to the bacterial CoaD family. As to quaternary structure, homohexamer. The cofactor is Mg(2+).

The protein resides in the cytoplasm. The catalysed reaction is (R)-4'-phosphopantetheine + ATP + H(+) = 3'-dephospho-CoA + diphosphate. Its pathway is cofactor biosynthesis; coenzyme A biosynthesis; CoA from (R)-pantothenate: step 4/5. In terms of biological role, reversibly transfers an adenylyl group from ATP to 4'-phosphopantetheine, yielding dephospho-CoA (dPCoA) and pyrophosphate. The polypeptide is Phosphopantetheine adenylyltransferase (Rubrobacter xylanophilus (strain DSM 9941 / JCM 11954 / NBRC 16129 / PRD-1)).